A 1389-amino-acid polypeptide reads, in one-letter code: MEVLMAERANLVFHNKAIDGTAMKRLISRLIEHFGMAYTSHILDQVKTLGFQQATATSISLGIDDLLTIPSKGWLVQDAEQQSLILEKHHHYGNVHAVEKLRQSIEIWYATSEYLRQEMNPNFRMTDPFNPVHIMSFSGARGNASQVHQLVGMRGLMSDPQGQMIDLPIQSNLREGLSLTEYIISCYGARKGVVDTAVRTSDAGYLTRRLVEVVQHIVVRRTDCGTARGISVSPRNGMMPERIFSQTLIGRVLADDIYMGPRCIATRNQDIGIGLVNRFITFRAQPISIRTPFTCRSTSWICRLCYGRSPTHGDLVELGEAVGIIAGQSIGEPGTQLTLRTFHTGGVFTGGTAEHVRAPSNGKIKFNEDLVHPTRTRHGHPAFLCSIDLYVTIESEDILHNVNIPPKSLLLVQNDQYVESEQVIAEIRAGISTLNFKEKVRKHIYSDSDGEMHWSTDVYHAPEFTYGNVHLLPKTSHLWILLGGPCKSSLVYLSIHKDQDQMNAHSLSGKQRYTSNLSVTNDQARQKLFSSGFSGKKEDRIPDYSDLNRIICTGQYNLVYSPILHENSDLLSKRRRNKFIIPLHSIQELENELMPCSGISIEIPVNGIFRRNSILAYFDDPRYRRKSSGIIKYGTIETHSVIKKEDLIEYRGVKEFRPKYQMKVDRFFFIPEEVHILPGSSSIMVRNNSIVGVDTQITLNLRSRVGGLVRVERKKKRIELKIFSGDIHFPGETDKISRHTGLLIPPGTGKINSKESKKVKKWIYVQRITPSKKKFFVLVRPVVTYEITDGINFETLFPPDPLQERDNVQLRIVNYILYGNGKPIRGISDTSIQLVRTCLVLNWNQDKKSSSCEEARASFVEIRTNGLIRHFLRINLVKSPISYIGKRNDPSGSGLLSDNGSDCTNINPFSSIYSYSKAKIQQSLNQPQGTIHTLLNRNKECQSLIILSSANCSRMGTLKYHSVIKDSIKKDPLIPIRNSLGPLGTCLPIENFYSSYRLITHNQILVTNYLQLDNLKQTFQVIKFKYYLMDENGKIFNPDPCRNIILNPFNLNWYFLHHNYCEETSKIISLGQFICENVCIAKNGPPLKSGQVILVQVDSIVIRSAKPYLATPGATVHGHYGETLYEGDTLVTFIYEKSRSGDITQGLPKVEQVLEVRSIDSISMNLEKRVEGWNKCITRILGIPWGFLIGAELTIAQSRISLVNKIQQVYRSQGVQIHNRHIEIIVRQITSKVLVSEDGMSNVFSPGELIGLLRAERMGRALEEAICYRVVLLGITRASLNTQSFISEASFQETARVLAKAALRGRIDWLKGLKENVVLGGVIPVGTGFKGLVHPSKQHNNIPLETKKKNLFEGEMRDILFHHRKLFDSCLSKKFHDIPEQSFIGFNDS.

Zn(2+) contacts are provided by cysteine 224, cysteine 295, cysteine 302, and cysteine 305.

This sequence belongs to the RNA polymerase beta' chain family. RpoC2 subfamily. In plastids the minimal PEP RNA polymerase catalytic core is composed of four subunits: alpha, beta, beta', and beta''. When a (nuclear-encoded) sigma factor is associated with the core the holoenzyme is formed, which can initiate transcription. The cofactor is Zn(2+).

The protein localises to the plastid. Its subcellular location is the chloroplast. It carries out the reaction RNA(n) + a ribonucleoside 5'-triphosphate = RNA(n+1) + diphosphate. Its function is as follows. DNA-dependent RNA polymerase catalyzes the transcription of DNA into RNA using the four ribonucleoside triphosphates as substrates. The chain is DNA-directed RNA polymerase subunit beta'' from Atropa belladonna (Belladonna).